The primary structure comprises 611 residues: Calmegin (611 aa).

A signal peptide spans 1 to 19; that stretch reads MRFQGVGLCLGLLFITVNA. Residues 20–471 lie on the Lumenal side of the membrane; the sequence is DFMDDGVEVE…LVIAAEERPW (452 aa). At lysine 128 the chain carries N6-acetyllysine. An intrachain disulfide couples cysteine 151 to cysteine 185. Residues 254–335 are disordered; sequence LDDVVPPINP…KAEKPEDWSD (82 aa). Residues 265 to 284 are compositionally biased toward basic and acidic residues; that stretch reads REIDDPSDKKPEEWDDRAKI. 8 consecutive repeat copies span residues 267–280, 284–297, 303–316, 322–335, 339–352, 356–369, 370–383, and 384–397. The tract at residues 317–350 is interaction with PPIB; the sequence is DEPKFIPNPKAEKPEDWSDDMDGEWEAPHIPNPA. A disulfide bridge links cysteine 351 with cysteine 355. A helical membrane pass occupies residues 472-492; the sequence is LWLMYLVMAGLPVALVASFCW. The Cytoplasmic segment spans residues 493–611; sequence PRKVKKKYED…SLRKRRVRKD (119 aa). The tract at residues 517 to 611 is disordered; that stretch reads AALEQEAEEE…SLRKRRVRKD (95 aa). Positions 526-584 are enriched in basic and acidic residues; it reads EKAPEKPEDVQEEKKPGEAEVVTVEKEVIGEPEEKSKEDRETLEGQEEVSKLSKSGSED. Serine 561, serine 578, serine 580, serine 582, serine 592, serine 595, and serine 602 each carry phosphoserine. Over residues 602-611 the composition is skewed to basic residues; sequence SLRKRRVRKD.

Belongs to the calreticulin family. Interacts with PDILT and PPIB. Interacts with ADAM2. Interacts with ADAM1A, ADAM1B and ADAM3; these are protein-coding genes in mouse but may be pseudogenes in other organisms. As to expression, detected in testis (at protein level). Detected in testis.

The protein localises to the endoplasmic reticulum membrane. Functions during spermatogenesis as a chaperone for a range of client proteins that are important for sperm adhesion onto the egg zona pellucida and for subsequent penetration of the zona pellucida. Required for normal sperm migration from the uterus into the oviduct. Required for normal male fertility. Binds calcium ions. This is Calmegin (Clgn) from Mus musculus (Mouse).